Consider the following 872-residue polypeptide: Valine--tRNA ligase (872 aa).

The 'HIGH' region motif lies at 45-55 (PYPTGNLHIGN). The short motif at 524 to 528 (KMSKS) is the 'KMSKS' region element. Lys527 contacts ATP.

It belongs to the class-I aminoacyl-tRNA synthetase family. ValS type 2 subfamily.

The protein localises to the cytoplasm. The catalysed reaction is tRNA(Val) + L-valine + ATP = L-valyl-tRNA(Val) + AMP + diphosphate. Catalyzes the attachment of valine to tRNA(Val). As ValRS can inadvertently accommodate and process structurally similar amino acids such as threonine, to avoid such errors, it has a 'posttransfer' editing activity that hydrolyzes mischarged Thr-tRNA(Val) in a tRNA-dependent manner. The sequence is that of Valine--tRNA ligase from Natronomonas pharaonis (strain ATCC 35678 / DSM 2160 / CIP 103997 / JCM 8858 / NBRC 14720 / NCIMB 2260 / Gabara) (Halobacterium pharaonis).